Reading from the N-terminus, the 210-residue chain is Outer-membrane lipoprotein LolB (210 aa).

The first 29 residues, 1–29, serve as a signal peptide directing secretion; the sequence is MSLISNNEERSLRVRYCIAIALSALLISG. Cys-30 carries N-palmitoyl cysteine lipidation. Cys-30 carries the S-diacylglycerol cysteine lipid modification.

This sequence belongs to the LolB family. Monomer.

Its subcellular location is the cell outer membrane. Functionally, plays a critical role in the incorporation of lipoproteins in the outer membrane after they are released by the LolA protein. The chain is Outer-membrane lipoprotein LolB from Coxiella burnetii (strain CbuK_Q154) (Coxiella burnetii (strain Q154)).